A 251-amino-acid chain; its full sequence is Imidazole glycerol phosphate synthase subunit HisF (251 aa).

Catalysis depends on residues Asp-11 and Asp-130.

It belongs to the HisA/HisF family. Heterodimer of HisH and HisF.

Its subcellular location is the cytoplasm. The enzyme catalyses 5-[(5-phospho-1-deoxy-D-ribulos-1-ylimino)methylamino]-1-(5-phospho-beta-D-ribosyl)imidazole-4-carboxamide + L-glutamine = D-erythro-1-(imidazol-4-yl)glycerol 3-phosphate + 5-amino-1-(5-phospho-beta-D-ribosyl)imidazole-4-carboxamide + L-glutamate + H(+). Its pathway is amino-acid biosynthesis; L-histidine biosynthesis; L-histidine from 5-phospho-alpha-D-ribose 1-diphosphate: step 5/9. In terms of biological role, IGPS catalyzes the conversion of PRFAR and glutamine to IGP, AICAR and glutamate. The HisF subunit catalyzes the cyclization activity that produces IGP and AICAR from PRFAR using the ammonia provided by the HisH subunit. In Bacteroides thetaiotaomicron (strain ATCC 29148 / DSM 2079 / JCM 5827 / CCUG 10774 / NCTC 10582 / VPI-5482 / E50), this protein is Imidazole glycerol phosphate synthase subunit HisF.